We begin with the raw amino-acid sequence, 238 residues long: Putative pectate lyase X (238 aa).

A signal peptide spans 1–22 (MKYLLPTAAAGLLLLAAQPAMA). Ca(2+)-binding residues include Asp153, Glu188, and Asp192.

Belongs to the polysaccharide lyase 1 family. It depends on Ca(2+) as a cofactor.

The catalysed reaction is Eliminative cleavage of (1-&gt;4)-alpha-D-galacturonan to give oligosaccharides with 4-deoxy-alpha-D-galact-4-enuronosyl groups at their non-reducing ends.. Its pathway is glycan metabolism; pectin degradation; 2-dehydro-3-deoxy-D-gluconate from pectin: step 2/5. Functionally, involved in maceration and soft-rotting of plant tissue. The protein is Putative pectate lyase X (PEL X) of Pectobacterium carotovorum (Erwinia carotovora).